A 223-amino-acid chain; its full sequence is Phosphoribosylformylglycinamidine synthase subunit PurQ (223 aa).

Residues 3–223 (SAVILLPGLN…LFAGALGITA (221 aa)) form the Glutamine amidotransferase type-1 domain. Catalysis depends on Cys-87, which acts as the Nucleophile. Active-site residues include His-197 and Glu-199.

Part of the FGAM synthase complex composed of 1 PurL, 1 PurQ and 2 PurS subunits.

The protein resides in the cytoplasm. The enzyme catalyses N(2)-formyl-N(1)-(5-phospho-beta-D-ribosyl)glycinamide + L-glutamine + ATP + H2O = 2-formamido-N(1)-(5-O-phospho-beta-D-ribosyl)acetamidine + L-glutamate + ADP + phosphate + H(+). The catalysed reaction is L-glutamine + H2O = L-glutamate + NH4(+). It functions in the pathway purine metabolism; IMP biosynthesis via de novo pathway; 5-amino-1-(5-phospho-D-ribosyl)imidazole from N(2)-formyl-N(1)-(5-phospho-D-ribosyl)glycinamide: step 1/2. Its function is as follows. Part of the phosphoribosylformylglycinamidine synthase complex involved in the purines biosynthetic pathway. Catalyzes the ATP-dependent conversion of formylglycinamide ribonucleotide (FGAR) and glutamine to yield formylglycinamidine ribonucleotide (FGAM) and glutamate. The FGAM synthase complex is composed of three subunits. PurQ produces an ammonia molecule by converting glutamine to glutamate. PurL transfers the ammonia molecule to FGAR to form FGAM in an ATP-dependent manner. PurS interacts with PurQ and PurL and is thought to assist in the transfer of the ammonia molecule from PurQ to PurL. This Brucella abortus biovar 1 (strain 9-941) protein is Phosphoribosylformylglycinamidine synthase subunit PurQ.